A 256-amino-acid polypeptide reads, in one-letter code: uncharacterized protein (256 aa).

A coiled-coil region spans residues 187-223; the sequence is MEEEEISEVEDALNVLQRLCAQEEGDNKEAETNNNNY.

This is an uncharacterized protein from Ostreid herpesvirus 1 (isolate France) (OsHV-1).